The primary structure comprises 229 residues: Ribonuclease HII (229 aa).

Residues 34-223 (WPVAGADEAG…LRKTENGPET (190 aa)) form the RNase H type-2 domain. Positions 40, 41, and 131 each coordinate a divalent metal cation. The tract at residues 209–229 (MSFRPLRKTENGPETDELLSE) is disordered.

The protein belongs to the RNase HII family. Requires Mn(2+) as cofactor. Mg(2+) serves as cofactor.

The protein resides in the cytoplasm. It carries out the reaction Endonucleolytic cleavage to 5'-phosphomonoester.. Its function is as follows. Endonuclease that specifically degrades the RNA of RNA-DNA hybrids. The protein is Ribonuclease HII of Rhizobium johnstonii (strain DSM 114642 / LMG 32736 / 3841) (Rhizobium leguminosarum bv. viciae).